The sequence spans 842 residues: CRM-domain containing factor CFM3, chloroplastic/mitochondrial (842 aa).

The N-terminal 82 residues, 1 to 82, are a transit peptide targeting the chloroplast and mitochondrion; the sequence is MAMASSPACH…RSSGRSTMSL (82 aa). 3 disordered regions span residues 49 to 80, 141 to 160, and 254 to 290; these read AALDLRPEPSPSSDSDDEDAVGASRSSGRSTM, RFPWERPMPPPEAAPRSARS, and VDYDEPEPTKKSKKNSQSLAMDFPIKGSSNPSLLPTE. The region spanning 167-263 is the CRM 1 domain; it reads LTLPAAELRR…VDYDEPEPTK (97 aa). The span at 280–290 shows a compositional bias: polar residues; that stretch reads GSSNPSLLPTE. CRM domains follow at residues 371–468 and 582–682; these read PSLS…ELAE and ETIT…SSLR. Positions 703–732 form a coiled coil; the sequence is QALSRHFAKLNRKVERLKAELVQMEDVKEQ. Residues 768 to 842 form a disordered region; sequence VAGATADDDG…DRRNHDVNEY (75 aa). The span at 786–812 shows a compositional bias: acidic residues; sequence DEADYPDSDDEAGDCSEDEGEDDEDEA. Residues 831 to 842 are compositionally biased toward basic and acidic residues; the sequence is DTDRRNHDVNEY.

In terms of assembly, interacts with RNA. Part of large ribonucleo-protein particles that contain CAF1 and/or CAF2, and RNC1.

Its subcellular location is the plastid. It is found in the chloroplast stroma. The protein resides in the mitochondrion. Binds specific group II introns in chloroplasts and facilitates their splicing. Acts on subgroup IIB introns. The substrates of the subgroup IIB also require the CRM domain proteins CAF1 or CAF2, with a simultaneous binding of CFM3 and CAF1 or CAF2. May influence the biogenesis of the mitochondrial small ribosomal subunit. The polypeptide is CRM-domain containing factor CFM3, chloroplastic/mitochondrial (Zea mays (Maize)).